Consider the following 974-residue polypeptide: UvrABC system protein A (974 aa).

34 to 41 (GLSGSGKS) serves as a coordination point for ATP. 2 consecutive ABC transporter domains span residues 331–610 (WARS…TNSL) and 630–959 (ISKT…QFLK). 663–670 (GVSGGGKS) is an ATP binding site. A C4-type zinc finger spans residues 762–788 (CEACQGDGVIKIEMHFLPDVYVTCDVC).

This sequence belongs to the ABC transporter superfamily. UvrA family. Forms a heterotetramer with UvrB during the search for lesions.

It is found in the cytoplasm. In terms of biological role, the UvrABC repair system catalyzes the recognition and processing of DNA lesions. UvrA is an ATPase and a DNA-binding protein. A damage recognition complex composed of 2 UvrA and 2 UvrB subunits scans DNA for abnormalities. When the presence of a lesion has been verified by UvrB, the UvrA molecules dissociate. The protein is UvrABC system protein A of Brucella abortus (strain 2308).